Reading from the N-terminus, the 251-residue chain is DNA repair protein RecO (251 aa).

This sequence belongs to the RecO family.

Involved in DNA repair and RecF pathway recombination. The polypeptide is DNA repair protein RecO (Staphylococcus saprophyticus subsp. saprophyticus (strain ATCC 15305 / DSM 20229 / NCIMB 8711 / NCTC 7292 / S-41)).